The sequence spans 500 residues: NADH-quinone oxidoreductase subunit N (500 aa).

14 helical membrane passes run 6–26 (SWIAVYPELVLLVMACLIALV), 40–60 (ALTLLTLGAVAVMEASYALGG), 69–89 (MVVVDPMGSWLKCFSSIALMI), 106–125 (GGEFFTLSLFALLGMFVMIS), 129–151 (FLVLYMGLELMTLCSYALVALRR), 164–184 (FVLGALASGFLLYGLSMLYGA), 207–227 (LVFGLVFIVAGLAFKLGAVPF), 239–259 (PTAVTLIIGGAPQLAAFAMTI), 276–296 (MLALMAIGSLVIGNLAAVAQT), 302–322 (LAFSTISQMGFLLLGLLAGVV), 337–357 (MFYALTYVLTTLAAFGIILLL), 380–400 (YAGVMAMSMFSLAGLPPLVGF), 417–437 (SYLVLAVFAVFMSLIGAFYYL), and 464–484 (IVLAINGALLLVLGIAPSSLM).

The protein belongs to the complex I subunit 2 family. In terms of assembly, NDH-1 is composed of 14 different subunits. Subunits NuoA, H, J, K, L, M, N constitute the membrane sector of the complex.

Its subcellular location is the cell inner membrane. It carries out the reaction a quinone + NADH + 5 H(+)(in) = a quinol + NAD(+) + 4 H(+)(out). NDH-1 shuttles electrons from NADH, via FMN and iron-sulfur (Fe-S) centers, to quinones in the respiratory chain. The immediate electron acceptor for the enzyme in this species is believed to be ubiquinone. Couples the redox reaction to proton translocation (for every two electrons transferred, four hydrogen ions are translocated across the cytoplasmic membrane), and thus conserves the redox energy in a proton gradient. This is NADH-quinone oxidoreductase subunit N from Polaromonas naphthalenivorans (strain CJ2).